The primary structure comprises 3993 residues: Intermembrane lipid transfer protein VPS13B (3993 aa).

The Chorein N-terminal domain maps to 2-102 (LESYVTPILM…KDGIQDDHES (101 aa)). Residues 100–133 (HESCGSNSTNRSTAENTKSSIKPRRIQQAAPADP) form a disordered region. Polar residues predominate over residues 103 to 119 (CGSNSTNRSTAENTKSS). 4 positions are modified to phosphoserine: Ser-413, Ser-998, Ser-1001, and Ser-1032. Disordered regions lie at residues 1262–1303 (SPVW…PFSD), 1616–1637 (DQLK…ERNS), and 1735–1770 (TKAT…DSGI). Polar residues predominate over residues 1264-1291 (VWSSVGTAPPDTSTCSPSADIGTTTEGD). Positions 1739–1750 (EISKQEQKKVDT) are enriched in basic and acidic residues. Polar residues predominate over residues 1756–1770 (AETSSRYSGAQDSGI). Ser-1789 carries the phosphoserine modification. The disordered stretch occupies residues 2048-2067 (HSSAHSKETSTPSDSILNMD). The region spanning 2604-2683 (HFVICNDTQE…TIQYKGRTAS (80 aa)) is the SHR-BD domain. The localizes the protein to the Golgi apparatus stretch occupies residues 3880 to 3993 (AFPITEISCA…KNKALRKGFS (114 aa)).

Belongs to the VPS13 family. In terms of assembly, interacts with STX6. Interacts with STX12 (via N-terminus). Interacts with RAB6A isoform 1 (GTP-bound) and isoform 2 (GTP-bound). Interacts with RAB6B (GTP-bound). As to expression, ubiquitously expressed in all examined tissues.

It localises to the recycling endosome membrane. The protein resides in the cytoplasmic vesicle. It is found in the secretory vesicle. The protein localises to the acrosome membrane. Its subcellular location is the golgi apparatus. It localises to the cis-Golgi network membrane. The protein resides in the endoplasmic reticulum-Golgi intermediate compartment membrane. It is found in the trans-Golgi network membrane. The protein localises to the early endosome membrane. Its subcellular location is the lysosome membrane. Its function is as follows. Mediates the transfer of lipids between membranes at organelle contact sites. Binds phosphatidylinositol 3-phosphate. Functions as a tethering factor in the slow endocytic recycling pathway, to assist traffic between early and recycling endosomes. Involved in the transport of proacrosomal vesicles to the nuclear dense lamina (NDL) during spermatid development. Plays a role in the assembly of the Golgi apparatus, possibly by mediating trafficking to the Golgi membrane. Plays a role in the development of the nervous system, and may be required for neuron projection development. May also play a role during adipose tissue development. Required for maintenance of the ocular lens. Required for proper organization of the Golgi. The polypeptide is Intermembrane lipid transfer protein VPS13B (Mus musculus (Mouse)).